Here is a 242-residue protein sequence, read N- to C-terminus: Carbendazim hydrolyzing esterase (242 aa).

S77 functions as the Acyl-ester intermediate in the catalytic mechanism.

This sequence belongs to the AB hydrolase superfamily.

The protein localises to the secreted. The catalysed reaction is carbendazim + H2O = 2-aminobenzimidazole + methanol + CO2. It catalyses the reaction carbendazim + H2O = N-(1H-1,3-benzodiazol-2-yl)carbamate + methanol + H(+). It carries out the reaction N-(1H-1,3-benzodiazol-2-yl)carbamate + H(+) = 2-aminobenzimidazole + CO2. Functionally, catalyzes the hydrolysis of the fungicide carbendazim (methyl-1H-benzimidazol-2-ylcarbamate or MBC) to 2-aminobenzimidazole (2-AB). Following hydrolysis of the carbamate ester, the carbamate decarboxylates spontaneously. Can hydrolyze model carboxylesters such as methyl salicylate, alpha-naphthyl acetate and p-nitrophenyl acetate. In addition, shows substantial hydrolytic activity in vitro against widespread pollutants with carboxylester, carbamate and amide linkages, such as dimethyl phthalate, propanil and chlorpropham. The protein is Carbendazim hydrolyzing esterase of Nocardioides sp. (strain SG-4G).